Here is a 609-residue protein sequence, read N- to C-terminus: Sodium- and chloride-dependent GABA transporter 2 (609 aa).

A compositionally biased stretch (polar residues) spans M1–E13. The disordered stretch occupies residues M1 to K23. Topologically, residues M1–E40 are cytoplasmic. Transmembrane regions (helical) follow at residues F41–L61, G68–L88, and I121–F141. Over S142–W206 the chain is Extracellular. C153 and C162 are joined by a disulfide. N169 and N173 each carry an N-linked (GlcNAc...) asparagine glycan. Transmembrane regions (helical) follow at residues E207–V227 and V233–V253. N-linked (GlcNAc...) asparagine glycosylation occurs at N269. 7 helical membrane-spanning segments follow: residues A282–S302, F319–M339, V366–L386, V418–G438, G453–A473, P490–F510, and W528–W548. The Cytoplasmic portion of the chain corresponds to S549–C609. A Phosphothreonine modification is found at T594. A Phosphoserine modification is found at S598.

Belongs to the sodium:neurotransmitter symporter (SNF) (TC 2.A.22) family. SLC6A13 subfamily.

The protein localises to the cell membrane. It localises to the basolateral cell membrane. It carries out the reaction 4-aminobutanoate(out) + chloride(out) + 2 Na(+)(out) = 4-aminobutanoate(in) + chloride(in) + 2 Na(+)(in). The catalysed reaction is taurine(out) + chloride(out) + 2 Na(+)(out) = taurine(in) + chloride(in) + 2 Na(+)(in). The enzyme catalyses beta-alanine(out) + chloride(out) + 2 Na(+)(out) = beta-alanine(in) + chloride(in) + 2 Na(+)(in). It catalyses the reaction hypotaurine(out) + chloride(out) + 2 Na(+)(out) = hypotaurine(in) + chloride(in) + 2 Na(+)(in). Mediates sodium- and chloride-dependent transport of gamma-aminobutyric acid (GABA). Can also mediate transport of beta-alanine, taurine and hypotaurine. The sequence is that of Sodium- and chloride-dependent GABA transporter 2 (SLC6A13) from Macaca fascicularis (Crab-eating macaque).